A 340-amino-acid chain; its full sequence is Glucokinase (340 aa).

Residue 17-22 (GDIGGT) coordinates ATP.

The protein belongs to the bacterial glucokinase family.

The protein resides in the cytoplasm. It catalyses the reaction D-glucose + ATP = D-glucose 6-phosphate + ADP + H(+). This is Glucokinase from Allorhizobium ampelinum (strain ATCC BAA-846 / DSM 112012 / S4) (Agrobacterium vitis (strain S4)).